Consider the following 942-residue polypeptide: Protein NLP1 (942 aa).

Residues 1–11 show a composition bias toward pro residues; the sequence is MEQKPSPPPPP. Disordered stretches follow at residues 1–32, 77–106, 594–620, 723–753, and 759–778; these read MEQK…GDIA, TTPA…VSPA, VKEN…TKTE, FQLE…PSCS, and SLGC…APQL. Residues 21 to 32 show a composition bias toward gly residues; the sequence is MGCGMGGTGDIA. Over residues 597–609 the composition is skewed to polar residues; that stretch reads NTCSSDPSNSNSD. The 82-residue stretch at 609 to 690 folds into the RWP-RK domain; the sequence is DKAVEKRRTK…IDSVHGPEGT (82 aa). The segment covering 743–753 has biased composition (low complexity); the sequence is SGSNSISPSCS. The segment covering 765-774 has biased composition (polar residues); sequence VPKTQQQHGS. Positions 844–927 constitute a PB1 domain; that stretch reads SLKIKAIYGE…QTVRILVNPS (84 aa).

The protein localises to the nucleus. In terms of biological role, probable transcription factor. The polypeptide is Protein NLP1 (NLP1) (Oryza sativa subsp. japonica (Rice)).